Here is a 123-residue protein sequence, read N- to C-terminus: Probable prefoldin subunit 4 (123 aa).

Belongs to the prefoldin subunit beta family. As to quaternary structure, heterohexamer of two PFD-alpha type and four PFD-beta type subunits.

In terms of biological role, binds specifically to cytosolic chaperonin (c-CPN) and transfers target proteins to it. Binds to nascent polypeptide chain and promotes folding in an environment in which there are many competing pathways for nonnative proteins. The sequence is that of Probable prefoldin subunit 4 from Schizosaccharomyces pombe (strain 972 / ATCC 24843) (Fission yeast).